A 199-amino-acid chain; its full sequence is Chaperone protein TorD (199 aa).

This sequence belongs to the TorD/DmsD family. TorD subfamily.

Its subcellular location is the cytoplasm. Its function is as follows. Involved in the biogenesis of TorA. Acts on TorA before the insertion of the molybdenum cofactor and, as a result, probably favors a conformation of the apoenzyme that is competent for acquiring the cofactor. The sequence is that of Chaperone protein TorD from Escherichia coli O127:H6 (strain E2348/69 / EPEC).